We begin with the raw amino-acid sequence, 338 residues long: Ferrochelatase (338 aa).

H189 and E293 together coordinate Fe cation.

This sequence belongs to the ferrochelatase family.

Its subcellular location is the cytoplasm. The catalysed reaction is heme b + 2 H(+) = protoporphyrin IX + Fe(2+). The protein operates within porphyrin-containing compound metabolism; protoheme biosynthesis; protoheme from protoporphyrin-IX: step 1/1. Catalyzes the ferrous insertion into protoporphyrin IX. This chain is Ferrochelatase, found in Azotobacter vinelandii (strain DJ / ATCC BAA-1303).